Reading from the N-terminus, the 337-residue chain is Protein-arginine kinase (337 aa).

Residues 8–239 (VVLSSRIRLA…KQIISSERRA (232 aa)) form the Phosphagen kinase C-terminal domain. Residues 11–15 (SSRIR), histidine 76, arginine 110, 161–165 (RASVM), and 192–197 (RGIYGE) contribute to the ATP site. The short motif at 321–326 (RDVKRA) is the RDXXRA motif of the pArg binding pocket involved in allosteric regulation element.

This sequence belongs to the ATP:guanido phosphotransferase family.

The catalysed reaction is L-arginyl-[protein] + ATP = N(omega)-phospho-L-arginyl-[protein] + ADP + H(+). Appears to be allosterically activated by the binding of pArg-containing polypeptides to the pArg-binding pocket localized in the C-terminal domain of McsB. In terms of biological role, catalyzes the specific phosphorylation of arginine residues in proteins. The polypeptide is Protein-arginine kinase (Caldanaerobacter subterraneus subsp. tengcongensis (strain DSM 15242 / JCM 11007 / NBRC 100824 / MB4) (Thermoanaerobacter tengcongensis)).